Consider the following 420-residue polypeptide: Probable secreted beta-glucosidase SUN4 (420 aa).

The N-terminal stretch at 1-24 (MKLSATTLTAASLIGYSTIVSALP) is a signal peptide. The tract at residues 89–145 (TKSSSKVASSSESTEQIATTSSSAQTTLTSSETSTSESSVPISTSGSASTSSAASSA) is disordered. N-linked (GlcNAc...) asparagine glycosylation is present at asparagine 395.

The protein belongs to the SUN family. Glycosylated.

It localises to the secreted. The protein resides in the cell wall. Functionally, involved in the remodeling of the cell wall during the various phases of yeast culture development and under various environmental conditions and plays a role in septation. The polypeptide is Probable secreted beta-glucosidase SUN4 (SUN4) (Saccharomyces cerevisiae (strain ATCC 204508 / S288c) (Baker's yeast)).